Consider the following 552-residue polypeptide: Phosphoglucomutase (552 aa).

The Phosphoserine intermediate role is filled by S143. Mg(2+) is bound by residues S143, D295, D297, and D299.

Belongs to the phosphohexose mutase family. It depends on Mg(2+) as a cofactor.

The enzyme catalyses alpha-D-glucose 1-phosphate = alpha-D-glucose 6-phosphate. It functions in the pathway glycolipid metabolism; diglucosyl-diacylglycerol biosynthesis. Its function is as follows. Catalyzes the interconversion between glucose-6-phosphate and alpha-glucose-1-phosphate. This is the first step in the biosynthesis of diglucosyl-diacylglycerol (Glc2-DAG), i.e. the predominant glycolipid found in the S.aureus membrane, which is also used as a membrane anchor for lipoteichoic acid (LTA). The sequence is that of Phosphoglucomutase (pgcA) from Staphylococcus aureus (strain MRSA252).